We begin with the raw amino-acid sequence, 122 residues long: UPF0102 protein Atu0303 (122 aa).

It belongs to the UPF0102 family.

The protein is UPF0102 protein Atu0303 of Agrobacterium fabrum (strain C58 / ATCC 33970) (Agrobacterium tumefaciens (strain C58)).